The primary structure comprises 324 residues: Short chain dehydrogenase/reductase dmxR8 (324 aa).

Residues leucine 33, lysine 58, aspartate 83, and asparagine 110 each coordinate NADP(+). Serine 163 functions as the Proton donor in the catalytic mechanism. NADP(+)-binding residues include tyrosine 200 and lysine 204. Tyrosine 200 acts as the Proton acceptor in catalysis. The Lowers pKa of active site Tyr role is filled by lysine 204.

The protein belongs to the short-chain dehydrogenases/reductases (SDR) family.

It participates in secondary metabolite biosynthesis. Short chain dehydrogenase; part of the gene cluster that mediates the biosynthesis of the dimeric xanthones cryptosporioptides. The pathway begins with the synthesis of atrochrysone thioester by the polyketide synthase dmx-nrPKS. The atrochrysone carboxyl ACP thioesterase dmxR1 then breaks the thioester bond and releases the atrochrysone carboxylic acid from dmx-nrPKS. Atrochrysone carboxylic acid is decarboxylated by the decarboxylase dmxR15, and oxidized by the anthrone oxygenase dmxR16 to yield emodin. Emodin is then reduced to emodin hydroquinone by the oxidoreductase dmxR7. A-ring reduction by the short chain dehydrogenase dmxR18, dehydration by the scytalone dehydratase-like protein dmxR17 and probable spontaneous re-oxidation, results in overall deoxygenation to chrysophanol. Baeyer-Villiger oxidation by the Baeyer-Villiger monooxygenase (BVMO) dmxR6 then yields monodictylactone in equilibrium with monodictyphenone. In the case of the cryptosporioptides biosynthesis, monodictylactone is reduced at C-12 to an alcohol (by the short chain dehydrogenases dmxR12 or dmxR8) and hydroxylated at C-5 by dmxR9, yielding the electron-rich aromatic which could eliminate H(2)O to form the ortho-quinonemethide, followed by tautomerisation to paraquinone and complete the formal reduction to produce the 10-methylgroup. Conjugate addition of C-4a-OH to the resulting paraquinone by the monooxygenase dmxR10 then gives cyclohexadienone, which is then reduced at C-5 by the short chain dehydrogenase dmxR3 to give the dihydroxanthone. The 6,7-epoxide in the cryptosporioptides could be introduced by the cytochrome P450 monooxygenase dmxL3. The highly reducing PKS dmxL2 manufactures butyrate, which is further carboxylated by dmxL1 to form ethylmalonate. It is not yet clear whether the carboxylation occurs while the butyrate is attached to the ACP of dmxL2, but this unusual fungal metabolite could then be esterified to O-5 by the O-acetyltransferase dmxR13. Finally, dimerization performed by dmxR5 gives the observed dimers cryptosporioptides A, B and C as the final products of the pathway. This Cryptosporiopsis sp. (strain 8999) protein is Short chain dehydrogenase/reductase dmxR8.